Consider the following 163-residue polypeptide: PTS system fructose-specific EIIB component (163 aa).

The region spanning 1–163 is the PTS EIIB type-4 domain; it reads MMNIVLARID…FVQILRNVTK (163 aa). The active-site Pros-phosphohistidine intermediate is the His15. Position 15 is a phosphohistidine; by EIIA (His15).

It localises to the cytoplasm. The enzyme catalyses D-fructose(out) + N(pros)-phospho-L-histidyl-[protein] = D-fructose 1-phosphate(in) + L-histidyl-[protein]. Its function is as follows. The phosphoenolpyruvate-dependent sugar phosphotransferase system (sugar PTS), a major carbohydrate active -transport system, catalyzes the phosphorylation of incoming sugar substrates concomitantly with their translocation across the cell membrane. The enzyme II LevDE PTS system is involved in fructose transport. LevD and LevE act as negative regulators of the levanase operon. They may be involved in a PTS-mediated phosphorylation of a regulator. This Bacillus subtilis (strain 168) protein is PTS system fructose-specific EIIB component.